Reading from the N-terminus, the 690-residue chain is Elongation factor G (690 aa).

The 276-residue stretch at 8–283 (EDYRNFGIMA…AVVAYLPSPL (276 aa)) folds into the tr-type G domain. Residues 17–24 (AHIDAGKT), 81–85 (DTPGH), and 135–138 (NKMD) contribute to the GTP site.

Belongs to the TRAFAC class translation factor GTPase superfamily. Classic translation factor GTPase family. EF-G/EF-2 subfamily.

It is found in the cytoplasm. Functionally, catalyzes the GTP-dependent ribosomal translocation step during translation elongation. During this step, the ribosome changes from the pre-translocational (PRE) to the post-translocational (POST) state as the newly formed A-site-bound peptidyl-tRNA and P-site-bound deacylated tRNA move to the P and E sites, respectively. Catalyzes the coordinated movement of the two tRNA molecules, the mRNA and conformational changes in the ribosome. This Nitrobacter winogradskyi (strain ATCC 25391 / DSM 10237 / CIP 104748 / NCIMB 11846 / Nb-255) protein is Elongation factor G.